A 284-amino-acid polypeptide reads, in one-letter code: Asialoglycoprotein receptor 1 (284 aa).

Residues 1–18 (MTKDYQDFQHLDNDNDHH) are compositionally biased toward basic and acidic residues. The tract at residues 1–25 (MTKDYQDFQHLDNDNDHHQLRRGPP) is disordered. Residues 1–39 (MTKDYQDFQHLDNDNDHHQLRRGPPPTPRLLQRLCSGSR) lie on the Cytoplasmic side of the membrane. The Endocytosis signal motif lies at 5 to 8 (YQDF). The S-palmitoyl cysteine moiety is linked to residue Cys-35. A helical; Signal-anchor for type II membrane protein transmembrane segment spans residues 40 to 60 (LLLLSSSLSILLLVVVCVITS). Residues 59-117 (TSQNSQLREDLLALRQNFSNLTVSTEDQVKALSTQGSSVGRKMKLVESKLEKQQKDLTE) adopt a coiled-coil conformation. Residues 61 to 284 (QNSQLREDLL…VCETKLDKAN (224 aa)) are Extracellular-facing. N-linked (GlcNAc...) asparagine glycosylation is found at Asn-75, Asn-78, and Asn-146. 3 disulfides stabilise this stretch: Cys-153–Cys-164, Cys-181–Cys-276, and Cys-254–Cys-268. In terms of domain architecture, C-type lectin spans 160-277 (YEGSCYWFSS…CRRPYRWVCE (118 aa)). The Ca(2+) site is built by Val-190, Glu-196, Asp-215, Gln-239, Asp-241, Glu-252, Asp-253, Asn-264, Asp-265, and Glu-277.

Interacts with LASS2. In terms of processing, phosphorylated on a cytoplasmic Ser residue. Expressed exclusively in hepatic parenchymal cells.

Its subcellular location is the membrane. In terms of biological role, mediates the endocytosis of plasma glycoproteins to which the terminal sialic acid residue on their complex carbohydrate moieties has been removed. The receptor recognizes terminal galactose and N-acetylgalactosamine units. After ligand binding to the receptor, the resulting complex is internalized and transported to a sorting organelle, where receptor and ligand are disassociated. The receptor then returns to the cell membrane surface. The sequence is that of Asialoglycoprotein receptor 1 (Asgr1) from Mus musculus (Mouse).